A 286-amino-acid polypeptide reads, in one-letter code: MAENTMWHETLHDQFGQYFAVDNVLYHEKTDHQDLIIFENAAFGRVMALDGVVQTTERDEFIYHEMMTHVPLLAHGHAKHVLIIGGGDGAMLREVTRHKNVETITMVEIDAGVVSFCRQYLPNHNAGSYDDPRFTLVIDDGVNFVNQTHQTFDVIISDCTDPIGPGESLFTSAFYEGCKRCLNPGGIFVAQNGVCFLQQDEALDSHRKLSHYFSDVGFYQAAIPTYYGGIMTFAWATDNDALRHLSSEIIQARFHAAGLKCRYYNPAIHAAAFALPQYLHDALSAQ.

Positions 5–238 (TMWHETLHDQ…GIMTFAWATD (234 aa)) constitute a PABS domain. Residue Gln-33 participates in S-methyl-5'-thioadenosine binding. Residues His-64 and Asp-88 each contribute to the spermidine site. Residues Glu-108 and 140–141 (DG) contribute to the S-methyl-5'-thioadenosine site. Asp-158 functions as the Proton acceptor in the catalytic mechanism. 158 to 161 (DCTD) is a binding site for spermidine. Pro-165 contacts S-methyl-5'-thioadenosine.

Belongs to the spermidine/spermine synthase family. Homodimer or homotetramer.

The protein localises to the cytoplasm. It catalyses the reaction S-adenosyl 3-(methylsulfanyl)propylamine + putrescine = S-methyl-5'-thioadenosine + spermidine + H(+). It participates in amine and polyamine biosynthesis; spermidine biosynthesis; spermidine from putrescine: step 1/1. In terms of biological role, catalyzes the irreversible transfer of a propylamine group from the amino donor S-adenosylmethioninamine (decarboxy-AdoMet) to putrescine (1,4-diaminobutane) to yield spermidine. This Salmonella enteritidis PT4 (strain P125109) protein is Polyamine aminopropyltransferase.